Here is a 368-residue protein sequence, read N- to C-terminus: Alanine racemase (368 aa).

Lysine 40 serves as the catalytic Proton acceptor; specific for D-alanine. Lysine 40 carries the post-translational modification N6-(pyridoxal phosphate)lysine. Arginine 134 contacts substrate. Catalysis depends on tyrosine 263, which acts as the Proton acceptor; specific for L-alanine. Methionine 310 provides a ligand contact to substrate.

Belongs to the alanine racemase family. Pyridoxal 5'-phosphate is required as a cofactor.

The enzyme catalyses L-alanine = D-alanine. Its pathway is amino-acid biosynthesis; D-alanine biosynthesis; D-alanine from L-alanine: step 1/1. Its function is as follows. Catalyzes the interconversion of L-alanine and D-alanine. May also act on other amino acids. The polypeptide is Alanine racemase (alr) (Listeria monocytogenes serovar 1/2a (strain ATCC BAA-679 / EGD-e)).